Consider the following 497-residue polypeptide: GDP-fucose protein O-fucosyltransferase 4 (497 aa).

The Cytoplasmic portion of the chain corresponds to M1–R6. Residues L7–A27 traverse the membrane as a helical; Signal-anchor for type II membrane protein segment. At S28–H497 the chain is on the lumenal side. A glycan (N-linked (GlcNAc...) asparagine) is linked at N169. C392 and C395 are disulfide-bonded. Positions R406 to H427 are disordered. An N-linked (GlcNAc...) asparagine glycan is attached at N474.

Belongs to the glycosyltransferase 10 family.

The protein resides in the endoplasmic reticulum membrane. It catalyses the reaction L-threonyl-[protein] + GDP-beta-L-fucose = 3-O-(alpha-L-fucosyl)-L-threonyl-[protein] + GDP + H(+). The catalysed reaction is L-seryl-[protein] + GDP-beta-L-fucose = 3-O-(alpha-L-fucosyl)-L-seryl-[protein] + GDP + H(+). The protein operates within protein modification; protein glycosylation. Functionally, protein O-fucosyltransferase that specifically catalyzes O-fucosylation of serine or threonine residues in EMI domains of target proteins. Attaches fucose through an O-glycosidic linkage. O-fucosylation of EMI domain-containing proteins may be required for facilitating protein folding and secretion. The sequence is that of GDP-fucose protein O-fucosyltransferase 4 (fut11) from Oryzias latipes (Japanese rice fish).